Consider the following 268-residue polypeptide: Cytochrome b-c1 complex subunit Rieske-3, mitochondrial (268 aa).

The N-terminal 56 residues, 1-56, are a transit peptide targeting the mitochondrion; sequence MLRIAGRKLSSSAATRSSSAFFTRNPFTFTDDSSSPARSPSPASLASQFLDQFRGF. Residues 57–105 lie on the Mitochondrial matrix side of the membrane; sequence SSNSVSPAHQTGLVSDLPATVAAIKNPSSKIVYDDSNHERYPPGDPSKR. A helical membrane pass occupies residues 106 to 128; it reads AFAYFVLTGGRFVYASLVRLLIL. The Mitochondrial intermembrane segment spans residues 129–268; that stretch reads KFVLSMSASK…FMEENKLLIG (140 aa). The Rieske domain occupies 178-266; that stretch reads INLANSVDLG…YSFMEENKLL (89 aa). Residues Cys-211, His-213, Cys-230, and His-233 each coordinate [2Fe-2S] cluster. Cys-216 and Cys-232 are disulfide-bonded.

It belongs to the Rieske iron-sulfur protein family. Component of the ubiquinol-cytochrome c oxidoreductase (cytochrome b-c1 complex, complex III, CIII), a multisubunit enzyme composed of 3 respiratory subunits cytochrome b, cytochrome c1 and Rieske protein, 2 core protein subunits, and several low-molecular weight protein subunits. The complex exists as an obligatory dimer and forms supercomplexes (SCs) in the inner mitochondrial membrane with cytochrome c oxidase (complex IV, CIV). [2Fe-2S] cluster is required as a cofactor. High levels are seen in the flowers while a low level expression is seen in the roots, leaves and stems.

The protein localises to the mitochondrion inner membrane. It catalyses the reaction a quinol + 2 Fe(III)-[cytochrome c](out) = a quinone + 2 Fe(II)-[cytochrome c](out) + 2 H(+)(out). Component of the ubiquinol-cytochrome c oxidoreductase, a multisubunit transmembrane complex that is part of the mitochondrial electron transport chain which drives oxidative phosphorylation. The respiratory chain contains 3 multisubunit complexes succinate dehydrogenase (complex II, CII), ubiquinol-cytochrome c oxidoreductase (cytochrome b-c1 complex, complex III, CIII) and cytochrome c oxidase (complex IV, CIV), that cooperate to transfer electrons derived from NADH and succinate to molecular oxygen, creating an electrochemical gradient over the inner membrane that drives transmembrane transport and the ATP synthase. The cytochrome b-c1 complex catalyzes electron transfer from ubiquinol to cytochrome c, linking this redox reaction to translocation of protons across the mitochondrial inner membrane, with protons being carried across the membrane as hydrogens on the quinol. In the process called Q cycle, 2 protons are consumed from the matrix, 4 protons are released into the intermembrane space and 2 electrons are passed to cytochrome c. The Rieske protein is a catalytic core subunit containing a [2Fe-2S] iron-sulfur cluster. It cycles between 2 conformational states during catalysis to transfer electrons from the quinol bound in the Q(0) site in cytochrome b to cytochrome c1. The protein is Cytochrome b-c1 complex subunit Rieske-3, mitochondrial of Nicotiana tabacum (Common tobacco).